We begin with the raw amino-acid sequence, 213 residues long: FMN-dependent NADH:quinone oxidoreductase (213 aa).

The protein belongs to the azoreductase type 1 family. As to quaternary structure, homodimer. It depends on FMN as a cofactor.

The enzyme catalyses 2 a quinone + NADH + H(+) = 2 a 1,4-benzosemiquinone + NAD(+). It catalyses the reaction N,N-dimethyl-1,4-phenylenediamine + anthranilate + 2 NAD(+) = 2-(4-dimethylaminophenyl)diazenylbenzoate + 2 NADH + 2 H(+). In terms of biological role, quinone reductase that provides resistance to thiol-specific stress caused by electrophilic quinones. Also exhibits azoreductase activity. Catalyzes the reductive cleavage of the azo bond in aromatic azo compounds to the corresponding amines. The protein is FMN-dependent NADH:quinone oxidoreductase of Streptococcus agalactiae serotype III (strain NEM316).